Reading from the N-terminus, the 1464-residue chain is Sister chromatid cohesion protein PDS5 homolog B-B (1464 aa).

One copy of the HEAT repeat lies at 383–419 (LLVNDQLLNFVRERTLDKRWRVRKEAMMGLAQIYKKY). The interval 1126–1464 (KSTNVLGAVN…MKSELEGPLL (339 aa)) is disordered. Residues 1137–1155 (PLSSAGKQMQSKSSRMETV) show a composition bias toward polar residues. Residues 1156 to 1168 (SNASSGSNPSSPG) are compositionally biased toward low complexity. Over residues 1177–1186 (TELDQIEYED) the composition is skewed to acidic residues. Basic and acidic residues-rich tracts occupy residues 1197–1215 (KKSDKRDDSDLLKSEVEKP), 1234–1244 (ELSKPAQEPKS), and 1265–1274 (WQEKRLKEDL). Over residues 1286–1295 (KKGRRGRPPK) the composition is skewed to basic residues. The segment at residues 1287 to 1299 (KGRRGRPPKSAKM) is a DNA-binding region (a.T hook 1). Residues 1325–1342 (PTDEEDHLEISEEQDSEN) show a composition bias toward acidic residues. The segment covering 1347 to 1357 (RKGRGSSKKTP) has biased composition (basic residues). Polar residues predominate over residues 1359–1373 (KSDSTDSALDTSRPT). DNA-binding regions (a.T hook) lie at residues 1375 to 1387 (QKRRGRPPKTPTV) and 1391 to 1403 (KSHVGRPRKVVSK). The span at 1390 to 1400 (KKSHVGRPRKV) shows a compositional bias: basic residues. Acidic residues predominate over residues 1425–1435 (SNEEETADEEV). Over residues 1441–1453 (GRRRTAKKRRWIQ) the composition is skewed to basic residues. Basic and acidic residues predominate over residues 1455-1464 (MKSELEGPLL).

This sequence belongs to the PDS5 family. As to quaternary structure, interacts with the cohesin complex. In terms of processing, phosphorylated in mitotic cells.

The protein localises to the nucleus. In terms of biological role, plays a role in androgen-induced proliferative arrest. Required for maintenance of sister chromatid cohesion during mitosis. The chain is Sister chromatid cohesion protein PDS5 homolog B-B (pds5b-b) from Xenopus laevis (African clawed frog).